The chain runs to 227 residues: ATP phosphoribosyltransferase (227 aa).

Belongs to the ATP phosphoribosyltransferase family. Short subfamily. In terms of assembly, heteromultimer composed of HisG and HisZ subunits.

It localises to the cytoplasm. It catalyses the reaction 1-(5-phospho-beta-D-ribosyl)-ATP + diphosphate = 5-phospho-alpha-D-ribose 1-diphosphate + ATP. It participates in amino-acid biosynthesis; L-histidine biosynthesis; L-histidine from 5-phospho-alpha-D-ribose 1-diphosphate: step 1/9. Catalyzes the condensation of ATP and 5-phosphoribose 1-diphosphate to form N'-(5'-phosphoribosyl)-ATP (PR-ATP). Has a crucial role in the pathway because the rate of histidine biosynthesis seems to be controlled primarily by regulation of HisG enzymatic activity. This chain is ATP phosphoribosyltransferase, found in Nitrosospira multiformis (strain ATCC 25196 / NCIMB 11849 / C 71).